Reading from the N-terminus, the 294-residue chain is Kynurenine formamidase (294 aa).

Residues methionine 1–arginine 14 show a composition bias toward basic and acidic residues. The disordered stretch occupies residues methionine 1–glutamine 20. An HGGXW motif is present at residues histidine 84–tryptophan 88. The active-site Nucleophile is the serine 153. Catalysis depends on residues aspartate 236 and histidine 269.

Belongs to the kynurenine formamidase family. Homodimer.

The protein resides in the cytoplasm. It is found in the cytosol. Its subcellular location is the nucleus. It catalyses the reaction N-formyl-L-kynurenine + H2O = L-kynurenine + formate + H(+). It participates in amino-acid degradation; L-tryptophan degradation via kynurenine pathway; L-kynurenine from L-tryptophan: step 2/2. Catalyzes the hydrolysis of N-formyl-L-kynurenine to L-kynurenine, the second step in the kynurenine pathway of tryptophan degradation. Kynurenine may be further oxidized to nicotinic acid, NAD(H) and NADP(H). Required for elimination of toxic metabolites. This chain is Kynurenine formamidase (afmid), found in Salmo salar (Atlantic salmon).